Consider the following 201-residue polypeptide: Retinol-binding protein 4 (201 aa).

An N-terminal signal peptide occupies residues 1–18; the sequence is MEWVWALVLLAALGGGSA. 3 disulfide bridges follow: Cys22/Cys178, Cys88/Cys192, and Cys138/Cys147. Gln116 serves as a coordination point for substrate. An Omega-N-methylarginine modification is found at Arg139.

The protein belongs to the calycin superfamily. Lipocalin family. In terms of assembly, interacts with TTR. Interaction with TTR prevents its loss by filtration through the kidney glomeruli. Interacts with STRA6. In terms of tissue distribution, detected in blood plasma (at protein level).

It is found in the secreted. Retinol-binding protein that mediates retinol transport in blood plasma. Delivers retinol from the liver stores to the peripheral tissues. Transfers the bound all-trans retinol to STRA6, that then facilitates retinol transport across the cell membrane. In Rattus norvegicus (Rat), this protein is Retinol-binding protein 4 (Rbp4).